Reading from the N-terminus, the 555-residue chain is DNA ligase (555 aa).

E247 is an ATP binding site. Residue K249 is the N6-AMP-lysine intermediate of the active site. Positions 254, 269, 298, 337, 411, and 417 each coordinate ATP.

The protein belongs to the ATP-dependent DNA ligase family. The cofactor is Mg(2+).

It carries out the reaction ATP + (deoxyribonucleotide)n-3'-hydroxyl + 5'-phospho-(deoxyribonucleotide)m = (deoxyribonucleotide)n+m + AMP + diphosphate.. DNA ligase that seals nicks in double-stranded DNA during DNA replication, DNA recombination and DNA repair. This is DNA ligase from Archaeoglobus fulgidus (strain ATCC 49558 / DSM 4304 / JCM 9628 / NBRC 100126 / VC-16).